The chain runs to 139 residues: S-adenosyl-L-methionine-binding protein AF_0241 (139 aa).

Residues 3-133 (LKPIGVVKSP…YSPEIDCVNQ (131 aa)) form the TsaA-like domain. S-adenosyl-L-methionine-binding positions include Gln16, 20-22 (PRQ), 58-59 (DK), Arg82, Leu92, and 113-116 (LDGS).

The protein belongs to the tRNA methyltransferase O family. In terms of assembly, homodimer.

This is S-adenosyl-L-methionine-binding protein AF_0241 from Archaeoglobus fulgidus (strain ATCC 49558 / DSM 4304 / JCM 9628 / NBRC 100126 / VC-16).